The sequence spans 292 residues: Zinc finger protein SNAI3 (292 aa).

The SNAG domain stretch occupies residues 1–20 (MPRSFLVKTHSSHRVPNYRR). C2H2-type zinc fingers lie at residues 152 to 174 (FECFHCHKPYHTLAGLARHRQLH), 183 to 205 (FTCKYCDKEYTSLGALKMHIRTH), 209 to 231 (CTCKICGKAFSRPWLLQGHVRTH), and 237 to 259 (YACSHCSRAFADRSNLRAHLQTH). A C2H2-type 5; degenerate zinc finger spans residues 265-287 (YRCRRCTKTFSRMSLLARHEESG).

This sequence belongs to the snail C2H2-type zinc-finger protein family.

Its subcellular location is the nucleus. Functionally, seems to inhibit myoblast differentiation. Transcriptional repressor of E-box-dependent transactivation of downstream myogenic bHLHs genes. Binds preferentially to the canonical E-box sequences 5'-CAGGTG-3' and 5'-CACCTG-3'. This is Zinc finger protein SNAI3 (SNAI3) from Homo sapiens (Human).